Reading from the N-terminus, the 807-residue chain is AP-5 complex subunit zeta-1 (807 aa).

Probably part of the adaptor protein complex 5 (AP-5) a tetramer composed of AP5B1, AP5M1, AP5S1 and AP5Z1. Interacts with ZFYVE26 and SPG11.

It is found in the cytoplasm. The protein resides in the nucleus. Its function is as follows. As part of AP-5, a probable fifth adaptor protein complex it may be involved in endosomal transport. In Mus musculus (Mouse), this protein is AP-5 complex subunit zeta-1 (Ap5z1).